Reading from the N-terminus, the 498-residue chain is Zinc finger protein 682 (498 aa).

Positions 4–75 (LTFRDVTIEF…KRHETIAKPP (72 aa)) constitute a KRAB domain. 10 C2H2-type zinc fingers span residues 173–195 (FKCMQCGKVFKSHSGLSYHKIIH), 201–223 (CICEECGKTFKWFSYLTKHKRIH), 229–251 (YKCEECGKAFNWCSSLTKHKRIH), 257–279 (YKCEECGKAFHWCSPFVRHKKIH), 285–307 (YTCEDCGRAFNRHSHLTKHKTIH), 313–335 (YKCKECGKAFNHCSLLTIHERTH), 341–363 (YKCEECGKAFNSSSILTEHKVIH), 369–391 (YKCEKCDKVFKRFSYLTKHKRIH), 397–419 (YKCEECGKAFNWSSILTEHKRIH), and 425–447 (YNCEECGKAFNRCSHLTRHKKIH). The C2H2-type 11; degenerate zinc finger occupies 453 to 475 (YKCEECGKAFKRCSHLNEHKRVQ).

Belongs to the krueppel C2H2-type zinc-finger protein family.

The protein resides in the nucleus. In terms of biological role, may be involved in transcriptional regulation. The sequence is that of Zinc finger protein 682 (ZNF682) from Homo sapiens (Human).